Consider the following 51-residue polypeptide: Insulin (51 aa).

Cystine bridges form between C7-C37, C19-C50, and C36-C41.

It belongs to the insulin family. In terms of assembly, heterodimer of a B chain and an A chain linked by two disulfide bonds.

The protein resides in the secreted. In terms of biological role, insulin decreases blood glucose concentration. It increases cell permeability to monosaccharides, amino acids and fatty acids. It accelerates glycolysis, the pentose phosphate cycle, and glycogen synthesis in liver. The sequence is that of Insulin (INS) from Elephas maximus (Indian elephant).